A 163-amino-acid chain; its full sequence is Urease accessory protein UreE (163 aa).

Residues 130–163 (PFEPEPGAYGGGHGHTHSHDHSHQHDPAGHAHEH) are disordered. Over residues 146–163 (HSHDHSHQHDPAGHAHEH) the composition is skewed to basic and acidic residues.

Belongs to the UreE family.

The protein localises to the cytoplasm. Its function is as follows. Involved in urease metallocenter assembly. Binds nickel. Probably functions as a nickel donor during metallocenter assembly. This chain is Urease accessory protein UreE, found in Alkalilimnicola ehrlichii (strain ATCC BAA-1101 / DSM 17681 / MLHE-1).